We begin with the raw amino-acid sequence, 235 residues long: Motile sperm domain-containing protein 3 (235 aa).

2 disordered regions span residues 1–30 (MRRG…PSGP) and 143–170 (ELQG…PFPE). Residues 33 to 145 (PVLVFPPDLV…RAPAYPLELQ (113 aa)) form the MSP domain. A run of 2 helical transmembrane segments spans residues 180–200 (SFLL…LPLQ) and 213–233 (VSLG…MVFL).

It is found in the membrane. The polypeptide is Motile sperm domain-containing protein 3 (MOSPD3) (Bos taurus (Bovine)).